A 465-amino-acid chain; its full sequence is Juvenile hormone epoxide hydrolase 2 (465 aa).

Residues 7-27 (ILWIAIVIGLGVLYYEITKEF) traverse the membrane as a helical segment. Asp-224 (nucleophile) is an active-site residue. Tyr-370 acts as the Proton donor in catalysis. The active-site Proton acceptor is His-427.

It belongs to the peptidase S33 family.

It localises to the microsome membrane. The protein resides in the endoplasmic reticulum membrane. The enzyme catalyses cis-stilbene oxide + H2O = (1R,2R)-hydrobenzoin. It catalyses the reaction 1-(4-methoxyphenyl)-N-methyl-N-[(3-methyloxetan-3-yl)methyl]methanamine + H2O = 2-{[(4-methoxybenzyl)(methyl)amino]methyl}-2-methylpropane-1,3-diol. Catalyzes juvenile hormone hydrolysis. In Ctenocephalides felis (Cat flea), this protein is Juvenile hormone epoxide hydrolase 2.